We begin with the raw amino-acid sequence, 198 residues long: Holliday junction branch migration complex subunit RuvA (198 aa).

The interval 1 to 63 is domain I; the sequence is MYDYIKGQLT…EDAHLLFGFH (63 aa). The tract at residues 64–142 is domain II; the sequence is TEDEKDVFLK…EAPQETGHTK (79 aa). Positions 143-147 are flexible linker; it reads ARSNK. The domain III stretch occupies residues 148–198; that stretch reads AGNTQLDEAIEALLALGYKAKELKKIRAFFEETSETAEQYIKSALKLLMKG.

This sequence belongs to the RuvA family. In terms of assembly, homotetramer. Forms an RuvA(8)-RuvB(12)-Holliday junction (HJ) complex. HJ DNA is sandwiched between 2 RuvA tetramers; dsDNA enters through RuvA and exits via RuvB. An RuvB hexamer assembles on each DNA strand where it exits the tetramer. Each RuvB hexamer is contacted by two RuvA subunits (via domain III) on 2 adjacent RuvB subunits; this complex drives branch migration. In the full resolvosome a probable DNA-RuvA(4)-RuvB(12)-RuvC(2) complex forms which resolves the HJ.

It is found in the cytoplasm. In terms of biological role, the RuvA-RuvB-RuvC complex processes Holliday junction (HJ) DNA during genetic recombination and DNA repair, while the RuvA-RuvB complex plays an important role in the rescue of blocked DNA replication forks via replication fork reversal (RFR). RuvA specifically binds to HJ cruciform DNA, conferring on it an open structure. The RuvB hexamer acts as an ATP-dependent pump, pulling dsDNA into and through the RuvAB complex. HJ branch migration allows RuvC to scan DNA until it finds its consensus sequence, where it cleaves and resolves the cruciform DNA. This is Holliday junction branch migration complex subunit RuvA from Streptococcus pyogenes serotype M2 (strain MGAS10270).